A 417-amino-acid chain; its full sequence is D-amino acid dehydrogenase (417 aa).

3 to 17 lines the FAD pocket; it reads IIVLGAGVIGVTSAY.

The protein belongs to the DadA oxidoreductase family. Requires FAD as cofactor.

The catalysed reaction is a D-alpha-amino acid + A + H2O = a 2-oxocarboxylate + AH2 + NH4(+). The protein operates within amino-acid degradation; D-alanine degradation; NH(3) and pyruvate from D-alanine: step 1/1. Functionally, oxidative deamination of D-amino acids. The protein is D-amino acid dehydrogenase of Azorhizobium caulinodans (strain ATCC 43989 / DSM 5975 / JCM 20966 / LMG 6465 / NBRC 14845 / NCIMB 13405 / ORS 571).